A 386-amino-acid polypeptide reads, in one-letter code: ATP phosphoribosyltransferase regulatory subunit (386 aa).

It belongs to the class-II aminoacyl-tRNA synthetase family. HisZ subfamily. Heteromultimer composed of HisG and HisZ subunits.

The protein resides in the cytoplasm. It functions in the pathway amino-acid biosynthesis; L-histidine biosynthesis; L-histidine from 5-phospho-alpha-D-ribose 1-diphosphate: step 1/9. Required for the first step of histidine biosynthesis. May allow the feedback regulation of ATP phosphoribosyltransferase activity by histidine. This chain is ATP phosphoribosyltransferase regulatory subunit, found in Rhodospirillum centenum (strain ATCC 51521 / SW).